Here is a 288-residue protein sequence, read N- to C-terminus: 33 kDa chaperonin (288 aa).

2 cysteine pairs are disulfide-bonded: Cys235–Cys237 and Cys268–Cys271.

Belongs to the HSP33 family. In terms of processing, under oxidizing conditions two disulfide bonds are formed involving the reactive cysteines. Under reducing conditions zinc is bound to the reactive cysteines and the protein is inactive.

The protein localises to the cytoplasm. Redox regulated molecular chaperone. Protects both thermally unfolding and oxidatively damaged proteins from irreversible aggregation. Plays an important role in the bacterial defense system toward oxidative stress. This is 33 kDa chaperonin from Streptococcus thermophilus (strain ATCC BAA-250 / LMG 18311).